The primary structure comprises 33 residues: Glucagon-2 (33 aa).

Belongs to the glucagon family.

Its subcellular location is the secreted. Promotes hydrolysis of glycogen and lipids, and raises the blood sugar level. This Oreochromis niloticus (Nile tilapia) protein is Glucagon-2 (gcg2).